The chain runs to 445 residues: Secretin receptor (445 aa).

The first 21 residues, 1-21 (MCPRPGPPLGLWLLLGFACAA), serve as a signal peptide directing secretion. At 22–137 (HLVGAPPRLC…HERQHAYLLK (116 aa)) the chain is on the extracellular side. Intrachain disulfides connect Cys-44–Cys-71, Cys-62–Cys-103, and Cys-85–Cys-119. Asn-68, Asn-96, Asn-102, and Asn-124 each carry an N-linked (GlcNAc...) asparagine glycan. The helical transmembrane segment at 138-163 (LKVMYTVGYSSSLVMLLVALGILCAF) threads the bilayer. Residues 164–170 (RRLHCTR) are Cytoplasmic-facing. A helical transmembrane segment spans residues 171–191 (NYIHMHLFLSFILRALSNFIK). At 192–212 (DAVLFSSDDAIHCDAHRVGCK) the chain is on the extracellular side. A disulfide bridge connects residues Cys-211 and Cys-281. Residues 213–235 (LVMVFFQYCIMANYAWLLVEGLY) form a helical membrane-spanning segment. At 236–250 (LHSLLVVSFFSERKC) the chain is on the cytoplasmic side. A helical membrane pass occupies residues 251–272 (LQGFVVLGWGSPAMFVTSWAVT). Topologically, residues 273-287 (RHFLEDSGCWDINAN) are extracellular. Residues 288 to 311 (AAIWWVIRGPVILSILINFILFIN) form a helical membrane-spanning segment. Topologically, residues 312-336 (ILRILTRKLRTQETRGQDMNHYKRL) are cytoplasmic. Residues 337 to 352 (ARSTLLLIPLFGVHYI) form a helical membrane-spanning segment. Residues 353 to 363 (VFVFSPEGAME) are Extracellular-facing. A helical transmembrane segment spans residues 364 to 387 (IQLFFELALGSFQGLVVAVLYCFL). Residues 388 to 445 (NGEVQLEVQKKWQQWHLWEPPLCPVALSSSFSNGTSSLNSTKACPSGRSRDTCKVSII) lie on the Cytoplasmic side of the membrane.

The protein belongs to the G-protein coupled receptor 2 family. Phosphorylated on Ser and Thr residues at the cytoplasmic C-terminus by G protein-coupled receptor kinases (GRKs).

The protein resides in the cell membrane. The protein localises to the basolateral cell membrane. In terms of biological role, g protein-coupled receptor activated by secretin (SCT), which is involved in different processes such as regulation of the pH of the duodenal content, food intake and water homeostasis. Ligand binding causes a conformation change that triggers signaling via guanine nucleotide-binding proteins (G proteins) and activates cAMP-dependent pathway. Upon binding to secretin, regulates the pH of the duodenum by (1) inhibiting the secretion of gastric acid from the parietal cells of the stomach and (2) stimulating the production of bicarbonate (NaHCO(3)) from the ductal cells of the pancreas. In addition to regulating the pH of the duodenal content, plays a central role in diet induced thermogenesis: acts as a non-sympathetic brown fat (BAT) activator mediating prandial thermogenesis, which consequentially induces satiation. Mechanistically, secretin released by the gut after a meal binds to secretin receptor (SCTR) in brown adipocytes, activating brown fat thermogenesis by stimulating lipolysis, which is sensed in the brain and promotes satiation. Also able to stimulate lipolysis in white adipocytes. Also plays an important role in cellular osmoregulation by regulating renal water reabsorption. Also plays a role in the central nervous system: required for synaptic plasticity. The protein is Secretin receptor (SCTR) of Oryctolagus cuniculus (Rabbit).